Here is a 105-residue protein sequence, read N- to C-terminus: MNRLKKGDDVIVIAGKDKGRRGVVKSFAKGGSLVLVEGINIVKKHIKPNPNRGIEDGVVEKELPVDASNVAIFNPATEKADRVGYKFVDEKKVRYFKSNGELVDL.

Belongs to the universal ribosomal protein uL24 family. As to quaternary structure, part of the 50S ribosomal subunit.

In terms of biological role, one of two assembly initiator proteins, it binds directly to the 5'-end of the 23S rRNA, where it nucleates assembly of the 50S subunit. Its function is as follows. One of the proteins that surrounds the polypeptide exit tunnel on the outside of the subunit. The chain is Large ribosomal subunit protein uL24 from Francisella tularensis subsp. tularensis (strain FSC 198).